A 99-amino-acid chain; its full sequence is Ferredoxin-2 (99 aa).

A 2Fe-2S ferredoxin-type domain is found at 4-96 (YQVRLINKKR…DCTIRTHQEA (93 aa)). [2Fe-2S] cluster is bound by residues Cys42, Cys47, Cys50, and Cys80.

The protein belongs to the 2Fe2S plant-type ferredoxin family. [2Fe-2S] cluster is required as a cofactor.

Functionally, ferredoxins are iron-sulfur proteins that transfer electrons in a wide variety of metabolic reactions. Donates electrons to the nitrogenase. The protein is Ferredoxin-2 (fdxH) of Leptolyngbya boryana (Plectonema boryanum).